Reading from the N-terminus, the 204-residue chain is Proteasome subunit beta type-3 (204 aa).

Belongs to the peptidase T1B family. As to quaternary structure, the 26S proteasome consists of a 20S proteasome core and two 19S regulatory subunits. The 20S proteasome core is composed of 28 subunits that are arranged in four stacked rings, resulting in a barrel-shaped structure. The two end rings are each formed by seven alpha subunits, and the two central rings are each formed by seven beta subunits. The catalytic chamber with the active sites is on the inside of the barrel.

Its subcellular location is the cytoplasm. It localises to the nucleus. Its function is as follows. Non-catalytic component of the proteasome, a multicatalytic proteinase complex which is characterized by its ability to cleave peptides with Arg, Phe, Tyr, Leu, and Glu adjacent to the leaving group at neutral or slightly basic pH. The proteasome has an ATP-dependent proteolytic activity. This chain is Proteasome subunit beta type-3 (pbs-3), found in Caenorhabditis elegans.